We begin with the raw amino-acid sequence, 365 residues long: DNA replication and repair protein RecF (365 aa).

30-37 (GPNGSGKT) contributes to the ATP binding site.

It belongs to the RecF family.

Its subcellular location is the cytoplasm. Its function is as follows. The RecF protein is involved in DNA metabolism; it is required for DNA replication and normal SOS inducibility. RecF binds preferentially to single-stranded, linear DNA. It also seems to bind ATP. The chain is DNA replication and repair protein RecF from Azotobacter vinelandii (strain DJ / ATCC BAA-1303).